An 824-amino-acid chain; its full sequence is AMP deaminase 2 (824 aa).

The segment at 1-43 is disordered; sequence MASYPGPGKSKAKYPFKKRASLQASAAAPEARSGLGASPLQSA. Residues 10-20 show a composition bias toward basic residues; it reads SKAKYPFKKRA. Position 21 is a phosphoserine (S21). Residues 21–33 show a composition bias toward low complexity; it reads SLQASAAAPEARS. An Omega-N-methylarginine modification is found at R44. S45, S63, and S79 each carry phosphoserine. Residue Y90 is modified to Phosphotyrosine. 2 positions are modified to phosphoserine: S96 and S113. Position 133 is a phosphothreonine (T133). Phosphoserine occurs at positions 135 and 137. Positions 364 and 366 each coordinate Zn(2+). Substrate contacts are provided by residues H366 and 435–440; that span reads KFNAKY. Residue H633 coordinates Zn(2+). Residue E636 participates in substrate binding. The active-site Proton acceptor is H655. D710 is a binding site for Zn(2+). 711 to 714 contacts substrate; it reads DPLQ.

It belongs to the metallo-dependent hydrolases superfamily. Adenosine and AMP deaminases family. Homotetramer. It depends on Zn(2+) as a cofactor.

The enzyme catalyses AMP + H2O + H(+) = IMP + NH4(+). It participates in purine metabolism; IMP biosynthesis via salvage pathway; IMP from AMP: step 1/1. Its function is as follows. AMP deaminase plays a critical role in energy metabolism. Catalyzes the deamination of AMP to IMP and plays an important role in the purine nucleotide cycle. The sequence is that of AMP deaminase 2 from Rattus norvegicus (Rat).